Here is a 314-residue protein sequence, read N- to C-terminus: Ribosomal protein L11 methyltransferase (314 aa).

S-adenosyl-L-methionine-binding residues include Thr-161, Gly-182, Asp-204, and Asn-248.

The protein belongs to the methyltransferase superfamily. PrmA family.

The protein localises to the cytoplasm. The catalysed reaction is L-lysyl-[protein] + 3 S-adenosyl-L-methionine = N(6),N(6),N(6)-trimethyl-L-lysyl-[protein] + 3 S-adenosyl-L-homocysteine + 3 H(+). Its function is as follows. Methylates ribosomal protein L11. This chain is Ribosomal protein L11 methyltransferase, found in Listeria innocua serovar 6a (strain ATCC BAA-680 / CLIP 11262).